The sequence spans 529 residues: Mannuronan C5-epimerase (529 aa).

The N-terminal stretch at 1-30 (MGACAMNPQALKGSAMLAAAMLLASGAAMA) is a signal peptide. 6 PbH1 repeats span residues 229 to 256 (GTETYISNTKMASFGYANSKSYGVSISQ), 291 to 313 (TTGFVIKGNTYKDNIVYGIDPHD), 315 to 338 (SHGLIIADNTVYGTKKKHGIIISR), 340 to 362 (VNDSFIFNNRSYDNKLSGLVLDR), 364 to 386 (SVNNFVADNEFYRNHTDGITLYE), and 387 to 409 (SGDNLLWGNKVIANRRHGIRVRN). The active-site Proton acceptor is H312.

It belongs to the D-mannuronate C5-epimerase family.

It localises to the periplasm. It catalyses the reaction [(1-&gt;4)-beta-D-mannuronosyl](n) = [alginate](n). Its pathway is glycan biosynthesis; alginate biosynthesis. Catalyzes the epimerization of beta-D-mannuronate to alpha-L-guluronate during the synthesis of the linear polysaccharide alginate. In addition, is part of a periplasmic protein complex that protects alginate from degradation by AlgL by channeling the newly formed alginate polymer through a scaffold that transfers the alginate polymer through the periplasmic space to the outer membrane secretin AlgE. This Pseudomonas fluorescens protein is Mannuronan C5-epimerase.